Consider the following 266-residue polypeptide: uncharacterized protein (266 aa).

This is an uncharacterized protein from Methanocaldococcus jannaschii (strain ATCC 43067 / DSM 2661 / JAL-1 / JCM 10045 / NBRC 100440) (Methanococcus jannaschii).